The sequence spans 93 residues: uncharacterized protein (93 aa).

The stretch at 36–69 (SEERLLSRLFEEMDELREAVEKEDWENLRDELLD) forms a coiled coil.

This is an uncharacterized protein from Archaeoglobus fulgidus (strain ATCC 49558 / DSM 4304 / JCM 9628 / NBRC 100126 / VC-16).